The primary structure comprises 431 residues: Glutamate-1-semialdehyde 2,1-aminomutase (431 aa).

At lysine 269 the chain carries N6-(pyridoxal phosphate)lysine.

The protein belongs to the class-III pyridoxal-phosphate-dependent aminotransferase family. HemL subfamily. In terms of assembly, homodimer. The cofactor is pyridoxal 5'-phosphate.

The protein localises to the cytoplasm. The enzyme catalyses (S)-4-amino-5-oxopentanoate = 5-aminolevulinate. The protein operates within porphyrin-containing compound metabolism; protoporphyrin-IX biosynthesis; 5-aminolevulinate from L-glutamyl-tRNA(Glu): step 2/2. Its pathway is porphyrin-containing compound metabolism; chlorophyll biosynthesis. The polypeptide is Glutamate-1-semialdehyde 2,1-aminomutase (Chlorobium phaeovibrioides (strain DSM 265 / 1930) (Prosthecochloris vibrioformis (strain DSM 265))).